Consider the following 129-residue polypeptide: Glycine cleavage system H protein (129 aa).

Residues Thr23–Lys104 form the Lipoyl-binding domain. Position 64 is an N6-lipoyllysine (Lys64).

Belongs to the GcvH family. In terms of assembly, the glycine cleavage system is composed of four proteins: P, T, L and H. (R)-lipoate is required as a cofactor.

In terms of biological role, the glycine cleavage system catalyzes the degradation of glycine. The H protein shuttles the methylamine group of glycine from the P protein to the T protein. In Nitrosospira multiformis (strain ATCC 25196 / NCIMB 11849 / C 71), this protein is Glycine cleavage system H protein.